A 58-amino-acid chain; its full sequence is Large ribosomal subunit protein bL32 (58 aa).

The protein belongs to the bacterial ribosomal protein bL32 family.

The protein is Large ribosomal subunit protein bL32 of Ligilactobacillus salivarius (strain UCC118) (Lactobacillus salivarius).